The sequence spans 326 residues: UDP-N-acetylglucosamine transporter (326 aa).

8 helical membrane passes run 8–24 (LSLG…VLTM), 42–58 (AVVV…ILLV), 138–154 (VYQW…VAFV), 174–190 (FVGL…SGFA), 210–226 (IQLG…GVYI), 247–263 (IVVI…AAVI), 269–285 (ILKG…STLI), and 296–312 (TSVF…ATFL).

Belongs to the nucleotide-sugar transporter family. SLC35A subfamily. As to quaternary structure, interacts with SLC35A2; the interaction is reduced in the presence of SLC35A4. Found in a complex with SLC35A2 and SLC35A4.

It localises to the golgi apparatus membrane. Functionally, uridine diphosphate-N-acetylglucosamine (UDP-GlcNAc) transporter in the Golgi apparatus. May supply UDP-GlcNAc as substrate for Golgi-resident glycosyltransferases that generate branching of diantennary oligosaccharides. The chain is UDP-N-acetylglucosamine transporter (SLC35A3) from Canis lupus familiaris (Dog).